The sequence spans 218 residues: Probable transaldolase (218 aa).

Lysine 84 serves as the catalytic Schiff-base intermediate with substrate.

This sequence belongs to the transaldolase family. Type 3B subfamily.

The protein resides in the cytoplasm. The enzyme catalyses D-sedoheptulose 7-phosphate + D-glyceraldehyde 3-phosphate = D-erythrose 4-phosphate + beta-D-fructose 6-phosphate. It participates in carbohydrate degradation; pentose phosphate pathway; D-glyceraldehyde 3-phosphate and beta-D-fructose 6-phosphate from D-ribose 5-phosphate and D-xylulose 5-phosphate (non-oxidative stage): step 2/3. Transaldolase is important for the balance of metabolites in the pentose-phosphate pathway. The polypeptide is Probable transaldolase (Bartonella henselae (strain ATCC 49882 / DSM 28221 / CCUG 30454 / Houston 1) (Rochalimaea henselae)).